Reading from the N-terminus, the 196-residue chain is Oocyte zinc finger protein XlCOF26 (196 aa).

7 consecutive C2H2-type zinc fingers follow at residues 6–28 (YSCT…QKNH), 34–56 (FTCT…QRIH), 62–84 (FTCT…QRIH), 90–112 (FTCT…HKIH), 118–140 (FTCP…QRTH), 146–168 (FTCT…QSTH), and 174–196 (FTCT…QMTH).

This sequence belongs to the krueppel C2H2-type zinc-finger protein family.

The protein resides in the nucleus. Its function is as follows. May be involved in transcriptional regulation. In Xenopus laevis (African clawed frog), this protein is Oocyte zinc finger protein XlCOF26.